Here is a 440-residue protein sequence, read N- to C-terminus: Histidinol dehydrogenase homolog 2 (440 aa).

H265 is a Zn(2+) binding site. Active-site proton acceptor residues include E333 and H334. Zn(2+) is bound at residue H426.

Belongs to the histidinol dehydrogenase family. Requires Zn(2+) as cofactor.

This chain is Histidinol dehydrogenase homolog 2, found in Mesorhizobium japonicum (strain LMG 29417 / CECT 9101 / MAFF 303099) (Mesorhizobium loti (strain MAFF 303099)).